The chain runs to 429 residues: Serine hydroxymethyltransferase (429 aa).

(6S)-5,6,7,8-tetrahydrofolate contacts are provided by residues L126 and 130–132 (GHL). Residue K235 is modified to N6-(pyridoxal phosphate)lysine. 359–361 (SPF) contributes to the (6S)-5,6,7,8-tetrahydrofolate binding site.

This sequence belongs to the SHMT family. In terms of assembly, homodimer. Pyridoxal 5'-phosphate serves as cofactor.

It is found in the cytoplasm. The enzyme catalyses (6R)-5,10-methylene-5,6,7,8-tetrahydrofolate + glycine + H2O = (6S)-5,6,7,8-tetrahydrofolate + L-serine. It participates in one-carbon metabolism; tetrahydrofolate interconversion. It functions in the pathway amino-acid biosynthesis; glycine biosynthesis; glycine from L-serine: step 1/1. In terms of biological role, catalyzes the reversible interconversion of serine and glycine with tetrahydrofolate (THF) serving as the one-carbon carrier. This reaction serves as the major source of one-carbon groups required for the biosynthesis of purines, thymidylate, methionine, and other important biomolecules. Also exhibits THF-independent aldolase activity toward beta-hydroxyamino acids, producing glycine and aldehydes, via a retro-aldol mechanism. The sequence is that of Serine hydroxymethyltransferase from Synechococcus sp. (strain WH7803).